The following is a 610-amino-acid chain: Menin (610 aa).

Residues 214 to 390 (GVAERSWLYL…SLLEAGEERP (177 aa)) are interaction with FANCD2. The disordered stretch occupies residues 460 to 552 (REAEAAEAEE…SPPPEGPVLT (93 aa)). Residues 484–500 (RRESKPEEPPPPKKPAL) are compositionally biased toward basic and acidic residues. Phosphoserine is present on residues serine 487 and serine 543. Threonine 594 carries the phosphothreonine modification.

In terms of assembly, component of the MLL-HCF complex, at least composed of KMT2A/MLL1, MEN1, ASH2L, RBBP5, DPY30, WDR5, HCFC1 and HCFC2. Component of the menin-associated histone methyltransferase complex, at least composed of KMT2B/MLL4, MEN1, ASH2L, RBBP5, DPY30 and WDR5. Interacts with POLR2B. Interacts with POLR2A phosphorylated at 'Ser-5', but not with the unphosphorylated, nor 'Ser-2' phosphorylated POLR2A forms. Interacts with FANCD2 and DBF4. Interacts with JUND (via MBM motif); inhibits the interaction of JUND with MAPK10 and the phosphorylation of JUND by MAP kinases MAPK8 and MAPK10. Interacts with SMAD3, but not with SMAD2, nor SMAD4. Directly interacts with NFKB1, NFKB2 and RELA. Interacts with KMT2A (via MBM motif). The KMT2A-MEN1 complex interacts with PSIP1 with a greater affinity as MEN1 enhances interaction of KMT2A with PSIP1. Interacts with the fusion protein KMT2A-MLLT3. In terms of tissue distribution, ubiquitous.

Its subcellular location is the nucleus. Functionally, essential component of a MLL/SET1 histone methyltransferase (HMT) complex, a complex that specifically methylates 'Lys-4' of histone H3 (H3K4). Functions as a transcriptional regulator. Binds to the TERT promoter and represses telomerase expression. Plays a role in TGFB1-mediated inhibition of cell-proliferation, possibly regulating SMAD3 transcriptional activity. Represses JUND-mediated transcriptional activation on AP1 sites, as well as that mediated by NFKB subunit RELA. Positively regulates HOXC8 and HOXC6 gene expression. May be involved in normal hematopoiesis through the activation of HOXA9 expression. May be involved in DNA repair. The protein is Menin (MEN1) of Homo sapiens (Human).